Reading from the N-terminus, the 337-residue chain is Basic membrane protein A2 (337 aa).

The signal sequence occupies residues 1-17; that stretch reads MNKLLLLILFECIIFLS. Cysteine 18 is lipidated: N-palmitoyl cysteine. A lipid anchor (S-diacylglycerol cysteine) is attached at cysteine 18.

It belongs to the BMP lipoprotein family. As to quaternary structure, monomer.

It is found in the cell inner membrane. Immunogenic protein. May be part of an ABC-type nucleoside uptake system involved in the purine salvage pathway. This Borrelia garinii subsp. bavariensis (strain ATCC BAA-2496 / DSM 23469 / PBi) (Borreliella bavariensis) protein is Basic membrane protein A2 (bmpA2).